Here is an 827-residue protein sequence, read N- to C-terminus: MLLCLSPAWLMKVATPGQEGEAVLLVSKAVSFYPGGLTFLDDFVPPRHATYFLAGLGPESGRGKEAAELARNLTCPTGTSSELSQLLENRLLMRWLLSQQSGVAVPATLAFTYRPPGLLRGGDASPGLRLVELSGKEGQETLVKEEVEAFVHSEALGDASQVAVRLSGCRWRGQQALPLHLRVEPSTVVNTVLGLLEKLEEEESVLVEAMCPPVRLPLPGGPAPGPELAVRICAVVCRIQGDRPLLSKVVCGVGRGDRPVRHHYTLPRTLRVALAQCGLEEEAQVALLEQGIKEAAEGALAAVLALEAGLSVEQRGGRQVHTDFLGVDLVLTVIGRTLTPVVLKLNSGLCLEACGALEGLWAVPRLRRSAEEAAAAPLVETMLRRSGRHLMDGKQLLVIGAGGVSKKFVWEAARDYGLTLHLVESDPNHFASQLVQTFIHFDVTEHRRDEENALLLAELVRARNLKLDGCFSFWDDCLVLTALLCRELGLPCSPPAAMCLAKQKSRTQLHLLRCQGPPWPSTSLHAVACCPLENEADVERAIYQVPLPGVMKLEFGSGAVGVQLVKDGPQCREHFSRILHDLQGEADHPGIGLGWGNAMLLMEFVEGTEHDVDLVVFGGRLLAAFVSDNGPTRLPGFTETAACMPTGLAPEQEAQVVQAAFRCCLGCGLLDGVFNVELKMTGAGPRLIEINPRMGGFYLRDWILELYGVDLLLASTMVACGLQPALPAHPRARGYLVGIMCLVSQHLQLLSSPSSRETLQTLHDQGQLRLNLLEEALIPGQYEEPYCNVACAGPSPAEACHRLLGICQGLGIDRPNYPVAHFLSHFK.

Positions G516–C720 constitute an ATP-grasp domain. ATP is bound at residue I542–D611. 3 residues coordinate Mg(2+): E677, E689, and N691. Mn(2+) is bound by residues E677, E689, and N691.

As to quaternary structure, homotetramer. Requires Mg(2+) as cofactor. The cofactor is Mn(2+).

The catalysed reaction is beta-alanine + L-histidine + ATP = carnosine + ADP + phosphate + H(+). The enzyme catalyses 4-aminobutanoate + L-histidine + ATP = L-homocarnosine + ADP + phosphate + H(+). In terms of biological role, catalyzes the synthesis of carnosine and homocarnosine. Carnosine is synthesized more efficiently than homocarnosine. The chain is Carnosine synthase 1 from Mus musculus (Mouse).